The following is a 483-amino-acid chain: Putative (R)-citramalate synthase CimA (483 aa).

The Pyruvate carboxyltransferase domain maps to 1 to 245; the sequence is MRDGEQTPGV…DTGIKHEQIY (245 aa).

The protein belongs to the alpha-IPM synthase/homocitrate synthase family. As to quaternary structure, homodimer.

The catalysed reaction is pyruvate + acetyl-CoA + H2O = (3R)-citramalate + CoA + H(+). Its pathway is amino-acid biosynthesis; L-isoleucine biosynthesis; 2-oxobutanoate from pyruvate: step 1/3. Catalyzes the condensation of pyruvate and acetyl-coenzyme A to form (R)-citramalate. This chain is Putative (R)-citramalate synthase CimA, found in Methanosarcina mazei (strain ATCC BAA-159 / DSM 3647 / Goe1 / Go1 / JCM 11833 / OCM 88) (Methanosarcina frisia).